The chain runs to 479 residues: ATP synthase subunit beta (479 aa).

An ATP-binding site is contributed by 153–160 (GGAGVGKT).

This sequence belongs to the ATPase alpha/beta chains family. F-type ATPases have 2 components, CF(1) - the catalytic core - and CF(0) - the membrane proton channel. CF(1) has five subunits: alpha(3), beta(3), gamma(1), delta(1), epsilon(1). CF(0) has three main subunits: a(1), b(2) and c(9-12). The alpha and beta chains form an alternating ring which encloses part of the gamma chain. CF(1) is attached to CF(0) by a central stalk formed by the gamma and epsilon chains, while a peripheral stalk is formed by the delta and b chains.

It is found in the cell membrane. The enzyme catalyses ATP + H2O + 4 H(+)(in) = ADP + phosphate + 5 H(+)(out). With respect to regulation, increases 2-fold following exposure to low pH. Its function is as follows. Produces ATP from ADP in the presence of a proton gradient across the membrane. The catalytic sites are hosted primarily by the beta subunits. This Lactobacillus acidophilus (strain ATCC 700396 / NCK56 / N2 / NCFM) protein is ATP synthase subunit beta.